An 80-amino-acid polypeptide reads, in one-letter code: Large ribosomal subunit protein bL31 (80 aa).

Residues cysteine 16, cysteine 18, cysteine 36, and cysteine 39 each contribute to the Zn(2+) site.

This sequence belongs to the bacterial ribosomal protein bL31 family. Type A subfamily. Part of the 50S ribosomal subunit. It depends on Zn(2+) as a cofactor.

Its function is as follows. Binds the 23S rRNA. This chain is Large ribosomal subunit protein bL31, found in Methylacidiphilum infernorum (isolate V4) (Methylokorus infernorum (strain V4)).